A 207-amino-acid polypeptide reads, in one-letter code: Transcription antitermination protein NusB (207 aa).

The protein belongs to the NusB family.

Functionally, involved in transcription antitermination. Required for transcription of ribosomal RNA (rRNA) genes. Binds specifically to the boxA antiterminator sequence of the ribosomal RNA (rrn) operons. The chain is Transcription antitermination protein NusB from Trichodesmium erythraeum (strain IMS101).